The primary structure comprises 584 residues: AAA ATPase forming ring-shaped complexes (584 aa).

The stretch at A10–H96 forms a coiled coil. The interval H40–A66 is disordered. Residue G292–M297 coordinates ATP.

The protein belongs to the AAA ATPase family. As to quaternary structure, homohexamer. Assembles into a hexameric ring structure.

In Micrococcus luteus (strain ATCC 4698 / DSM 20030 / JCM 1464 / CCM 169 / CCUG 5858 / IAM 1056 / NBRC 3333 / NCIMB 9278 / NCTC 2665 / VKM Ac-2230) (Micrococcus lysodeikticus), this protein is AAA ATPase forming ring-shaped complexes.